The following is a 207-amino-acid chain: Segregation and condensation protein B (207 aa).

This sequence belongs to the ScpB family. As to quaternary structure, homodimer. Homodimerization may be required to stabilize the binding of ScpA to the Smc head domains. Component of a cohesin-like complex composed of ScpA, ScpB and the Smc homodimer, in which ScpA and ScpB bind to the head domain of Smc. The presence of the three proteins is required for the association of the complex with DNA.

The protein localises to the cytoplasm. In terms of biological role, participates in chromosomal partition during cell division. May act via the formation of a condensin-like complex containing Smc and ScpA that pull DNA away from mid-cell into both cell halves. The polypeptide is Segregation and condensation protein B (Mycoplasma genitalium (strain ATCC 33530 / DSM 19775 / NCTC 10195 / G37) (Mycoplasmoides genitalium)).